We begin with the raw amino-acid sequence, 349 residues long: Cobalt-precorrin-5B C(1)-methyltransferase (349 aa).

Belongs to the CbiD family.

It catalyses the reaction Co-precorrin-5B + S-adenosyl-L-methionine = Co-precorrin-6A + S-adenosyl-L-homocysteine. Its pathway is cofactor biosynthesis; adenosylcobalamin biosynthesis; cob(II)yrinate a,c-diamide from sirohydrochlorin (anaerobic route): step 6/10. In terms of biological role, catalyzes the methylation of C-1 in cobalt-precorrin-5B to form cobalt-precorrin-6A. In Saccharolobus islandicus (strain L.S.2.15 / Lassen #1) (Sulfolobus islandicus), this protein is Cobalt-precorrin-5B C(1)-methyltransferase.